The primary structure comprises 313 residues: Coproporphyrin III ferrochelatase (313 aa).

His191 and Glu270 together coordinate Fe(2+).

Belongs to the ferrochelatase family.

It localises to the cytoplasm. It carries out the reaction Fe-coproporphyrin III + 2 H(+) = coproporphyrin III + Fe(2+). It participates in porphyrin-containing compound metabolism; protoheme biosynthesis. Functionally, involved in coproporphyrin-dependent heme b biosynthesis. Catalyzes the insertion of ferrous iron into coproporphyrin III to form Fe-coproporphyrin III. This chain is Coproporphyrin III ferrochelatase, found in Enterococcus faecalis (strain ATCC 700802 / V583).